Here is a 316-residue protein sequence, read N- to C-terminus: ATP synthase gamma chain (316 aa).

This sequence belongs to the ATPase gamma chain family. In terms of assembly, F-type ATPases have 2 components, CF(1) - the catalytic core - and CF(0) - the membrane proton channel. CF(1) has five subunits: alpha(3), beta(3), gamma(1), delta(1), epsilon(1). CF(0) has three main subunits: a, b and c.

It localises to the cellular thylakoid membrane. Its function is as follows. Produces ATP from ADP in the presence of a proton gradient across the membrane. The gamma chain is believed to be important in regulating ATPase activity and the flow of protons through the CF(0) complex. The protein is ATP synthase gamma chain of Synechococcus sp. (strain WH7803).